Here is a 432-residue protein sequence, read N- to C-terminus: Chaperone SurA (432 aa).

An N-terminal signal peptide occupies residues M1–A26. PpiC domains follow at residues Q176–D277 and V286–G386.

The protein localises to the periplasm. The enzyme catalyses [protein]-peptidylproline (omega=180) = [protein]-peptidylproline (omega=0). Chaperone involved in the correct folding and assembly of outer membrane proteins. Recognizes specific patterns of aromatic residues and the orientation of their side chains, which are found more frequently in integral outer membrane proteins. May act in both early periplasmic and late outer membrane-associated steps of protein maturation. In Idiomarina loihiensis (strain ATCC BAA-735 / DSM 15497 / L2-TR), this protein is Chaperone SurA.